Reading from the N-terminus, the 405-residue chain is Tryptophan synthase beta chain (405 aa).

Position 95 is an N6-(pyridoxal phosphate)lysine (lysine 95).

This sequence belongs to the TrpB family. Tetramer of two alpha and two beta chains. Requires pyridoxal 5'-phosphate as cofactor.

It carries out the reaction (1S,2R)-1-C-(indol-3-yl)glycerol 3-phosphate + L-serine = D-glyceraldehyde 3-phosphate + L-tryptophan + H2O. It participates in amino-acid biosynthesis; L-tryptophan biosynthesis; L-tryptophan from chorismate: step 5/5. Functionally, the beta subunit is responsible for the synthesis of L-tryptophan from indole and L-serine. This is Tryptophan synthase beta chain (trpB) from Pseudomonas putida (Arthrobacter siderocapsulatus).